The primary structure comprises 429 residues: Saccharopine dehydrogenase-like oxidoreductase (429 aa).

The residue at position 2 (Ala2) is an N-acetylalanine. Phosphoserine occurs at positions 209, 215, and 217.

Belongs to the saccharopine dehydrogenase family.

The protein is Saccharopine dehydrogenase-like oxidoreductase (Sccpdh) of Rattus norvegicus (Rat).